We begin with the raw amino-acid sequence, 723 residues long: ABC transporter F family member 4 (723 aa).

The interval 1 to 117 (MGKKKSDESA…KEQKKREAKE (117 aa)) is disordered. Residues 18-31 (SGKDASKDSKKEKL) show a composition bias toward basic and acidic residues. Residues 50–65 (GSSSRTKAAPKSTSYT) show a composition bias toward polar residues. Residues 72 to 84 (PSDEEDDGESDEE) are compositionally biased toward acidic residues. Basic and acidic residues predominate over residues 95 to 117 (KSEQRHLEISVTDKEQKKREAKE). The ABC transporter 1 domain occupies 163–423 (ITIESFSVSA…EMNKKFDVYD (261 aa)). Residue 195–202 (GPNGMGKS) coordinates ATP. Disordered stretches follow at residues 256–275 (LQKSSSGADGENVDGEDDDD) and 427–472 (KAAK…APEA). Positions 266 to 275 (ENVDGEDDDD) are enriched in acidic residues. The segment covering 437-446 (QQEKVKDRAK) has biased composition (basic and acidic residues). In terms of domain architecture, ABC transporter 2 spans 496 to 721 (LQLIEVSFSY…DLQREIKAEV (226 aa)). 530–537 (GPNGAGKS) serves as a coordination point for ATP.

Belongs to the ABC transporter superfamily. ABCF family. EF3 (TC 3.A.1.121) subfamily.

This Arabidopsis thaliana (Mouse-ear cress) protein is ABC transporter F family member 4 (ABCF4).